Here is a 259-residue protein sequence, read N- to C-terminus: Protein unc-50 homolog (259 aa).

Methionine 1 is subject to N-acetylmethionine. Residues 1 to 17 (MLPSTSVNSPAQGNGVL) are compositionally biased toward polar residues. Positions 1 to 22 (MLPSTSVNSPAQGNGVLSSRDA) are disordered. Residues 1 to 82 (MLPSTSVNSP…TKDQWARDDP (82 aa)) are Cytoplasmic-facing. The residue at position 6 (serine 6) is a Phosphoserine. The chain crosses the membrane as a helical span at residues 83–103 (AFLVLLSIWLCVSTIGFGFVL). At 104–115 (DMGFFETIKLLL) the chain is on the lumenal side. Residues 116 to 136 (WVVFIDCVGVGLLISTLMWFI) form a helical membrane-spanning segment. Residues 137-163 (SNKYLVKRQSRDYDVEWGYAFDVHLNA) are Cytoplasmic-facing. Residues 164 to 184 (FYPLLVILHFIQLFFINHVIL) traverse the membrane as a helical segment. Residues 185–187 (TDT) are Lumenal-facing. A helical membrane pass occupies residues 188–208 (FIGYLVGNTLWLVAVGYYIYV). The Cytoplasmic portion of the chain corresponds to 209-222 (TFLGYSALPFLKNT). The helical transmembrane segment at 223–243 (VILLYPFAPLILLYGLSLALG) threads the bilayer. Residues 244–259 (WNFTHTLCSFYKYRVK) are Lumenal-facing.

This sequence belongs to the unc-50 family.

The protein localises to the nucleus inner membrane. It is found in the golgi apparatus membrane. Its function is as follows. Involved in the cell surface expression of neuronal nicotinic receptors. Binds RNA. The chain is Protein unc-50 homolog (UNC50) from Bos taurus (Bovine).